The following is a 405-amino-acid chain: Magnesium-protoporphyrin IX monomethyl ester [oxidative] cyclase, chloroplastic (405 aa).

A chloroplast-targeting transit peptide spans 1-43; that stretch reads MATEMALVKPISKFSTSSPIFSNSRYGKFTTVRMSSTSQSTTK.

This sequence belongs to the AcsF family. Fe cation is required as a cofactor.

It is found in the plastid. It localises to the chloroplast. It catalyses the reaction Mg-protoporphyrin IX 13-monomethyl ester + 3 NADPH + 3 O2 + 2 H(+) = 3,8-divinyl protochlorophyllide a + 3 NADP(+) + 5 H2O. Its pathway is porphyrin-containing compound metabolism; chlorophyll biosynthesis. Functionally, catalyzes the formation of the isocyclic ring in chlorophyll biosynthesis. Mediates the cyclase reaction, which results in the formation of divinylprotochlorophyllide (Pchlide) characteristic of all chlorophylls from magnesium-protoporphyrin IX 13-monomethyl ester (MgPMME). The chain is Magnesium-protoporphyrin IX monomethyl ester [oxidative] cyclase, chloroplastic (CRD1) from Gossypium hirsutum (Upland cotton).